A 123-amino-acid chain; its full sequence is Small ribosomal subunit protein uS8 (123 aa).

Belongs to the universal ribosomal protein uS8 family. In terms of assembly, part of the 30S ribosomal subunit. Contacts proteins S5 and S12.

Its function is as follows. One of the primary rRNA binding proteins, it binds directly to 16S rRNA central domain where it helps coordinate assembly of the platform of the 30S subunit. The sequence is that of Small ribosomal subunit protein uS8 (rpsH) from Carsonella ruddii (strain PV).